The primary structure comprises 134 residues: MVSAWIYFTSLMLTCANIMLQMYFTVMYSDLKDDFINPIDLSRKLNWYVLPEMGFQAFSALLLLLSGAWITFLLNVPMLAWNAKMIMSNTHMHDSTTIFKDVSSRQKRSFFKLACFAVFFFVYLFLFVSRLVDE.

3 helical membrane-spanning segments follow: residues 8 to 28 (FTSL…TVMY), 54 to 74 (GFQA…TFLL), and 113 to 133 (LACF…RLVD).

This sequence belongs to the cornichon family.

Its subcellular location is the endoplasmic reticulum membrane. This is an uncharacterized protein from Schizosaccharomyces pombe (strain 972 / ATCC 24843) (Fission yeast).